The sequence spans 258 residues: Phosphate import ATP-binding protein PstB (258 aa).

The 243-residue stretch at Ile5–Lys247 folds into the ABC transporter domain. Residue Gly37 to Ser44 participates in ATP binding.

This sequence belongs to the ABC transporter superfamily. Phosphate importer (TC 3.A.1.7) family. As to quaternary structure, the complex is composed of two ATP-binding proteins (PstB), two transmembrane proteins (PstC and PstA) and a solute-binding protein (PstS).

It localises to the cell membrane. The enzyme catalyses phosphate(out) + ATP + H2O = ADP + 2 phosphate(in) + H(+). Its function is as follows. Part of the ABC transporter complex PstSACB involved in phosphate import. Responsible for energy coupling to the transport system. The chain is Phosphate import ATP-binding protein PstB from Cutibacterium acnes (strain DSM 16379 / KPA171202) (Propionibacterium acnes).